The following is a 263-amino-acid chain: TLC domain-containing protein 4 (263 aa).

4 helical membrane-spanning segments follow: residues 7–27, 53–73, 90–110, and 124–144; these read LLIS…YFVS, VVST…FLFD, VNIA…ILYW, and ASLY…IGNF. The 203-residue stretch at 44–246 folds into the TLC domain; that stretch reads KKKIEWNSRV…ISKGCIKVIS (203 aa). K165 is subject to N6-acetyllysine. 2 helical membrane-spanning segments follow: residues 173–193 and 211–231; these read IVIN…ASML and LGVL…VMNV.

The protein belongs to the TLCD4 family.

Its subcellular location is the membrane. The chain is TLC domain-containing protein 4 from Homo sapiens (Human).